We begin with the raw amino-acid sequence, 164 residues long: Peptide deformylase (164 aa).

The Fe cation site is built by cysteine 87 and histidine 129. Residue glutamate 130 is part of the active site. Residue histidine 133 participates in Fe cation binding.

Belongs to the polypeptide deformylase family. Requires Fe(2+) as cofactor.

The enzyme catalyses N-terminal N-formyl-L-methionyl-[peptide] + H2O = N-terminal L-methionyl-[peptide] + formate. Removes the formyl group from the N-terminal Met of newly synthesized proteins. Requires at least a dipeptide for an efficient rate of reaction. N-terminal L-methionine is a prerequisite for activity but the enzyme has broad specificity at other positions. The sequence is that of Peptide deformylase from Thermotoga maritima (strain ATCC 43589 / DSM 3109 / JCM 10099 / NBRC 100826 / MSB8).